Here is a 140-residue protein sequence, read N- to C-terminus: Sec-independent protein translocase protein TatB (140 aa).

Residues 1–21 (MFDIGFSELLLIAVVALVVLG) form a helical membrane-spanning segment. The interval 119-140 (VHVTSPPPSTSTHGNNGQEKSQ) is disordered. Over residues 128-140 (TSTHGNNGQEKSQ) the composition is skewed to polar residues.

It belongs to the TatB family. The Tat system comprises two distinct complexes: a TatABC complex, containing multiple copies of TatA, TatB and TatC subunits, and a separate TatA complex, containing only TatA subunits. Substrates initially bind to the TatABC complex, which probably triggers association of the separate TatA complex to form the active translocon.

Its subcellular location is the cell inner membrane. Its function is as follows. Part of the twin-arginine translocation (Tat) system that transports large folded proteins containing a characteristic twin-arginine motif in their signal peptide across membranes. Together with TatC, TatB is part of a receptor directly interacting with Tat signal peptides. TatB may form an oligomeric binding site that transiently accommodates folded Tat precursor proteins before their translocation. The polypeptide is Sec-independent protein translocase protein TatB (Xylella fastidiosa (strain 9a5c)).